Reading from the N-terminus, the 230-residue chain is Protein tumorous testis (230 aa).

The RRM domain occupies 37 to 128; that stretch reads GELFLSCIPR…RELVLKNVES (92 aa).

Part of a complex composed of at least tut, bam and bgcn; complex formation does not require RNA. Interacts with bam (via N-terminus); the interaction is direct. Interacts with bgcn; the interaction is indirect and is mediated by bam. As part of the bam-bgcn-tut complex associates with twin; may recruit the CCR4-NOT1 deadenylation complex to mRNA 3'UTRs to mediate post-transcriptional regulation of expression.

The protein resides in the cytoplasm. Its function is as follows. RNA binding protein that forms a complex with bam and bgcn, involved in 3'UTR-dependent regulation of a subset of mRNAs. Preferentially binds a long isoform of mei-P26 transcripts. Involved in 3'UTR-dependent post-transcriptional repression of several 3'-RNA processing factors. Involved in promoting germline stem cell lineage differentiation and mitosis-to-meiosis transition. Required for proper transit amplification of spermatogonia. This Drosophila melanogaster (Fruit fly) protein is Protein tumorous testis.